Consider the following 519-residue polypeptide: Cytosol aminopeptidase (519 aa).

Serine 42 carries the post-translational modification Phosphoserine. Lysine 45 bears the N6-succinyllysine mark. Serine 54 bears the Phosphoserine mark. An N6-succinyllysine mark is found at lysine 61 and lysine 103. Phosphoserine is present on residues serine 180 and serine 194. Zn(2+)-binding residues include leucine 202, methionine 203, and threonine 205. Serine 238 bears the Phosphoserine mark. Zn(2+) is bound by residues lysine 282 and aspartate 287. Residues lysine 282, aspartate 287, serine 292, and lysine 294 each coordinate substrate. Aspartate 287 provides a ligand contact to Mg(2+). Lysine 294 is an active-site residue. Zn(2+)-binding residues include arginine 303, aspartate 305, aspartate 364, and glutamate 366. The substrate site is built by aspartate 305 and aspartate 364. Aspartate 364 and glutamate 366 together coordinate Mg(2+). Arginine 368 is a catalytic residue. Lysine 455 is subject to N6-acetyllysine; alternate. N6-succinyllysine; alternate is present on lysine 455. N6-succinyllysine is present on lysine 476. Lysine 489 carries the post-translational modification N6-acetyllysine; alternate. Lysine 489 carries the post-translational modification N6-succinyllysine; alternate.

It belongs to the peptidase M17 family. In terms of assembly, homohexamer. Requires Zn(2+) as cofactor. It depends on Mn(2+) as a cofactor.

Its subcellular location is the cytoplasm. It catalyses the reaction Release of an N-terminal amino acid, Xaa-|-Yaa-, in which Xaa is preferably Leu, but may be other amino acids including Pro although not Arg or Lys, and Yaa may be Pro. Amino acid amides and methyl esters are also readily hydrolyzed, but rates on arylamides are exceedingly low.. The catalysed reaction is an S-substituted L-cysteinylglycine + H2O = an S-substituted L-cysteine + glycine. It carries out the reaction L-cysteinylglycine + H2O = L-cysteine + glycine. The enzyme catalyses S-benzyl-L-cysteinylglycine + H2O = S-benzyl-L-cysteine + glycine. It catalyses the reaction Release of N-terminal proline from a peptide.. Its activity is regulated as follows. Zofenoprilat inhibits Cys-Gly hydrolysis activity. Functionally, cytosolic metallopeptidase that catalyzes the removal of unsubstituted N-terminal hydrophobic amino acids from various peptides. The presence of Zn(2+) ions is essential for the peptidase activity, and the association with other cofactors can modulate the substrate spectificity of the enzyme. For instance, in the presence of Mn(2+), it displays a specific Cys-Gly hydrolyzing activity of Cys-Gly-S-conjugates. Involved in the metabolism of glutathione and in the degradation of glutathione S-conjugates, which may play a role in the control of the cell redox status. The protein is Cytosol aminopeptidase of Bos taurus (Bovine).